Here is a 107-residue protein sequence, read N- to C-terminus: uncharacterized protein (107 aa).

2 consecutive transmembrane segments (helical) span residues 14 to 34 and 68 to 88; these read YLAE…IVAW and FFVF…LVPI.

It is found in the cell membrane. This is an uncharacterized protein from Haemophilus influenzae (strain ATCC 51907 / DSM 11121 / KW20 / Rd).